Here is a 210-residue protein sequence, read N- to C-terminus: Dof zinc finger protein DOF4.4 (210 aa).

A Dof-type zinc finger spans residues 24 to 78; that stretch reads RVCPRCDSDNTKFCFYNNYSESQPRYFCKNCRRYWTHGGALRNIPVGGSCRKPKR. Zn(2+)-binding residues include Cys26, Cys29, Cys51, and Cys54.

It is found in the nucleus. Transcription factor that binds specifically to a 5'-AA[AG]G-3' consensus core sequence. This Arabidopsis thaliana (Mouse-ear cress) protein is Dof zinc finger protein DOF4.4 (DOF4.4).